The following is a 169-amino-acid chain: Peptide deformylase (169 aa).

C91 and H133 together coordinate Fe cation. Residue E134 is part of the active site. Position 137 (H137) interacts with Fe cation.

The protein belongs to the polypeptide deformylase family. Fe(2+) is required as a cofactor.

It catalyses the reaction N-terminal N-formyl-L-methionyl-[peptide] + H2O = N-terminal L-methionyl-[peptide] + formate. Removes the formyl group from the N-terminal Met of newly synthesized proteins. Requires at least a dipeptide for an efficient rate of reaction. N-terminal L-methionine is a prerequisite for activity but the enzyme has broad specificity at other positions. The sequence is that of Peptide deformylase from Shigella boydii serotype 18 (strain CDC 3083-94 / BS512).